We begin with the raw amino-acid sequence, 226 residues long: 7-cyano-7-deazaguanine synthase (226 aa).

An ATP-binding site is contributed by 11 to 21; the sequence is LSGGLDSATCL. The Zn(2+) site is built by cysteine 191, cysteine 201, cysteine 204, and cysteine 207.

Belongs to the QueC family. Zn(2+) serves as cofactor.

It catalyses the reaction 7-carboxy-7-deazaguanine + NH4(+) + ATP = 7-cyano-7-deazaguanine + ADP + phosphate + H2O + H(+). Its pathway is purine metabolism; 7-cyano-7-deazaguanine biosynthesis. Catalyzes the ATP-dependent conversion of 7-carboxy-7-deazaguanine (CDG) to 7-cyano-7-deazaguanine (preQ(0)). The protein is 7-cyano-7-deazaguanine synthase of Aromatoleum aromaticum (strain DSM 19018 / LMG 30748 / EbN1) (Azoarcus sp. (strain EbN1)).